Here is a 311-residue protein sequence, read N- to C-terminus: Aspartate carbamoyltransferase catalytic subunit (311 aa).

2 residues coordinate carbamoyl phosphate: arginine 55 and threonine 56. Lysine 85 serves as a coordination point for L-aspartate. Positions 106, 135, and 138 each coordinate carbamoyl phosphate. Arginine 168 and arginine 230 together coordinate L-aspartate. Residues leucine 268 and proline 269 each coordinate carbamoyl phosphate.

The protein belongs to the aspartate/ornithine carbamoyltransferase superfamily. ATCase family. In terms of assembly, heterododecamer (2C3:3R2) of six catalytic PyrB chains organized as two trimers (C3), and six regulatory PyrI chains organized as three dimers (R2).

The enzyme catalyses carbamoyl phosphate + L-aspartate = N-carbamoyl-L-aspartate + phosphate + H(+). It functions in the pathway pyrimidine metabolism; UMP biosynthesis via de novo pathway; (S)-dihydroorotate from bicarbonate: step 2/3. In terms of biological role, catalyzes the condensation of carbamoyl phosphate and aspartate to form carbamoyl aspartate and inorganic phosphate, the committed step in the de novo pyrimidine nucleotide biosynthesis pathway. The polypeptide is Aspartate carbamoyltransferase catalytic subunit (Salmonella paratyphi C (strain RKS4594)).